The sequence spans 306 residues: Pantothenate kinase (306 aa).

91 to 98 (GSVAVGKS) contacts ATP.

Belongs to the prokaryotic pantothenate kinase family.

The protein localises to the cytoplasm. The enzyme catalyses (R)-pantothenate + ATP = (R)-4'-phosphopantothenate + ADP + H(+). The protein operates within cofactor biosynthesis; coenzyme A biosynthesis; CoA from (R)-pantothenate: step 1/5. The chain is Pantothenate kinase (coaA) from Streptococcus pyogenes serotype M3 (strain ATCC BAA-595 / MGAS315).